A 744-amino-acid chain; its full sequence is Catalase A (744 aa).

Residues His93 and Asn166 contribute to the active site. Heme is bound at residue Tyr380.

Belongs to the catalase family. Heme is required as a cofactor.

The protein resides in the peroxisome matrix. It catalyses the reaction 2 H2O2 = O2 + 2 H2O. Catalyzes the degradation of hydrogen peroxide (H(2)O(2)) generated by peroxisomal oxidases to water and oxygen, thereby protecting cells from the toxic effects of hydrogen peroxide. The polypeptide is Catalase A (catA) (Emericella nidulans (strain FGSC A4 / ATCC 38163 / CBS 112.46 / NRRL 194 / M139) (Aspergillus nidulans)).